The chain runs to 228 residues: L-ribulose-5-phosphate 4-epimerase UlaF (228 aa).

Substrate contacts are provided by residues 26–27 (GN), 43–44 (SG), and 72–73 (SS). Zn(2+) is bound by residues D74, H93, and H95. D118 serves as the catalytic Proton donor/acceptor. H167 serves as a coordination point for Zn(2+). Y225 acts as the Proton donor/acceptor in catalysis.

The protein belongs to the aldolase class II family. AraD/FucA subfamily. It depends on Zn(2+) as a cofactor.

It carries out the reaction L-ribulose 5-phosphate = D-xylulose 5-phosphate. It participates in cofactor degradation; L-ascorbate degradation; D-xylulose 5-phosphate from L-ascorbate: step 4/4. Functionally, catalyzes the isomerization of L-ribulose 5-phosphate to D-xylulose 5-phosphate. Is involved in the anaerobic L-ascorbate utilization. The chain is L-ribulose-5-phosphate 4-epimerase UlaF from Escherichia coli O45:K1 (strain S88 / ExPEC).